An 888-amino-acid chain; its full sequence is E3 ubiquitin-protein ligase SH3RF1 (888 aa).

An RING-type zinc finger spans residues 12–53; sequence CPVCLERLDASAKVLPCQHTFCKRCLLGIVGSRNELRCPECR. 2 consecutive SH3 domains span residues 134 to 193 and 196 to 259; these read PQLP…IIKP and QPPP…FNSA. The segment at 275–321 is disordered; that stretch reads DAGECSSAAAQSSTAPKHSDTKKNTKKRHSFTSLTMANKSSQASQNR. Positions 292 to 362 are interaction with RAC1; that stretch reads HSDTKKNTKK…APSQVHISTT (71 aa). Ser-304 carries the phosphoserine modification. Positions 305 to 321 are enriched in polar residues; the sequence is FTSLTMANKSSQASQNR. The segment at 440 to 543 is interaction with AKT2; sequence HLRPQTRPSV…STAGGPAQKL (104 aa). The SH3 3 domain maps to 445–506; sequence TRPSVYVAIY…PGNYVAPVTR (62 aa). 3 disordered regions span residues 516 to 549, 617 to 637, and 693 to 741; these read VPMS…NGVA, SPAS…APLM, and PDSA…ASPT. Polar residues predominate over residues 520 to 535; the sequence is TAGQTSRGVTMVSPST. The residue at position 532 (Ser-532) is a Phosphoserine. The span at 693–704 shows a compositional bias: polar residues; the sequence is PDSASLACGNSS. A compositionally biased stretch (basic and acidic residues) spans 707–718; sequence KPDKDSKKEKKG. Ser-735 is modified (phosphoserine). Residues 829-888 form the SH3 4 domain; that stretch reads VVCERHRVVVSYPPQSEAELELKEGDIVFVHKKREDGWFKGTLQRNGKTGLFPGSFVENI.

Belongs to the SH3RF family. As to quaternary structure, interacts with HERP1. Interacts with RAC1; in a GTP-dependent manner. Interacts with MAP3K10/MLK2 and MAP3K11/MLK3. Interacts with MAPK8IP; this interaction leads to the PJAC complex (POSH-JIP or SH3RF1/MAPK8IP apoptotic complex) with a 1:1 ratio. Interacts with SIAH1. Probably part of a signaling complex that may contain SH3RF1, MAPK8IP, DLK1, MAP2K4/MKK4, MAP2K7/MKK7, MAPK8/JNK1, MAPK9/JNK2, AKT1 and AKT2. Found in a complex with RAC2, MAP3K7/TAK1, MAP2K7/MKK7, MAPK8IP1/JIP1, MAPK8/JNK1 and MAPK9/JNK2. Found in a complex with RAC1, MAP3K11/MLK3, MAP2K7/MKK7, MAPK8IP1/JIP1 and MAPK8/JNK1. Interacts with SH3RF2. Post-translationally, phosphorylated at Ser-304 by AKT1 and AKT2. When phosphorylated, it has reduced ability to bind Rac. In terms of processing, autoubiquitinated. Ubiquitinated by SH3RF2, leading to proteasome-mediated degradation.

The protein localises to the cytoplasm. It localises to the perinuclear region. The protein resides in the cell projection. It is found in the lamellipodium. Its subcellular location is the golgi apparatus. The protein localises to the trans-Golgi network. The catalysed reaction is S-ubiquitinyl-[E2 ubiquitin-conjugating enzyme]-L-cysteine + [acceptor protein]-L-lysine = [E2 ubiquitin-conjugating enzyme]-L-cysteine + N(6)-ubiquitinyl-[acceptor protein]-L-lysine.. The protein operates within protein modification; protein ubiquitination. Its function is as follows. Has E3 ubiquitin-protein ligase activity. In the absence of an external substrate, it can catalyze self-ubiquitination. Stimulates ubiquitination of potassium channel KCNJ1, enhancing it's dynamin-dependent and clathrin-independent endocytosis. Acts as a scaffold protein that coordinates with MAPK8IP1/JIP1 in organizing different components of the JNK pathway, including RAC1 or RAC2, MAP3K11/MLK3 or MAP3K7/TAK1, MAP2K7/MKK7, MAPK8/JNK1 and/or MAPK9/JNK2 into a functional multiprotein complex to ensure the effective activation of the JNK signaling pathway. Regulates the differentiation of CD4(+) and CD8(+) T-cells and promotes T-helper 1 (Th1) cell differentiation. Regulates the activation of MAPK8/JNK1 and MAPK9/JNK2 in CD4(+) T-cells and the activation of MAPK8/JNK1 in CD8(+) T-cells. Controls proper cortical neuronal migration and the formation of proximal cytoplasmic dilation in the leading process (PCDLP) in migratory neocortical neurons by regulating the proper localization of activated RAC1 and F-actin assembly. The polypeptide is E3 ubiquitin-protein ligase SH3RF1 (SH3RF1) (Pongo abelii (Sumatran orangutan)).